The sequence spans 317 residues: DNA repair nuclease/redox regulator APEX1 (317 aa).

The interval Met-1–Ser-58 is disordered. The segment at Pro-2–Thr-32 is necessary for interaction with YBX1, binding to RNA, association together with NPM1 to rRNA, endoribonuclease activity on abasic RNA and localization in the nucleoli. An N6-acetyllysine; by EP300 mark is found at Lys-6 and Lys-7. The Nuclear localization signal (NLS) signature appears at Ala-8–Asp-12. A compositionally biased stretch (basic and acidic residues) spans Glu-15–Ala-37. At Ser-18 the chain carries Phosphoserine. The interval Thr-22 to Thr-32 is necessary for interaction with NPM1 and for efficient rRNA binding. N6-acetyllysine is present on residues Lys-26, Lys-30, Lys-31, and Lys-34. Ser-53 carries the post-translational modification Phosphoserine. Positions Ile-63–Gly-79 match the Nuclear export signal (NES) motif. S-nitrosocysteine; alternate is present on Cys-64. Residues Cys-64 and Cys-92 are joined by a disulfide bond. Asp-69 provides a ligand contact to Mg(2+). An S-nitrosocysteine; alternate modification is found at Cys-92. Glu-95 is a binding site for Mg(2+). Tyr-170 is a catalytic residue. Position 196 is an N6-acetyllysine (Lys-196). The Mg(2+) site is built by Asp-209 and Asn-211. Catalysis depends on Asp-209, which acts as the Proton donor/acceptor. Thr-232 is modified (phosphothreonine; by CDK5). The mitochondrial targeting sequence (MTS) stretch occupies residues His-288 to Leu-317. Asp-307 is a binding site for Mg(2+). The residue at position 309 (Cys-309) is an S-nitrosocysteine.

This sequence belongs to the DNA repair enzymes AP/ExoA family. Monomer. Homodimer; disulfide-linked. Component of the SET complex, composed of at least APEX1, SET, ANP32A, HMGB2, NME1 and TREX1. Associates with the dimer XRCC5/XRCC6 in a DNA-dependent manner. Interacts with SIRT1; the interaction is increased in the context of genotoxic stress. Interacts with HDAC1, HDAC2 and HDAC3; the interactions are not dependent on the APEX1 acetylation status. Interacts with XRCC1; the interaction is induced by SIRT1 and increased with the APEX1 acetylated form. Interacts with NPM1 (via N-terminal domain); the interaction is RNA-dependent and decreases in hydrogen peroxide-damaged cells. Interacts (via N-terminus) with YBX1 (via C-terminus); the interaction is increased in presence of APEX1 acetylated at Lys-6 and Lys-7. Interacts with HNRNPL; the interaction is DNA-dependent. Interacts (via N-terminus) with KPNA1 and KPNA2. Interacts with TXN; the interaction stimulates the FOS/JUN AP-1 complex DNA-binding activity in a redox-dependent manner. Interacts with GZMA, KRT8, MDM2, POLB, PRDX6, PRPF19, RPLP0, TOMM20 and WDR77. Binds to CDK5. The cofactor is Mg(2+). Requires Mn(2+) as cofactor. In terms of processing, phosphorylated. Phosphorylation by kinase PKC or casein kinase CK2 results in enhanced redox activity that stimulates binding of the FOS/JUN AP-1 complex to its cognate binding site. AP-endodeoxyribonuclease activity is not affected by CK2-mediated phosphorylation. Phosphorylation of Thr-232 by CDK5 in response to MPP(+)/MPTP (1-methyl-4-phenylpyridinium) reduces AP-endodeoxyribonuclease activity resulting in accumulation of DNA damage and contributing to neuronal death. Post-translationally, acetylated on Lys-6 and Lys-7. Acetylation is increased by the transcriptional coactivator EP300 acetyltransferase, genotoxic agents like H(2)O(2) and methyl methanesulfonate (MMS). Acetylation increases its binding affinity to the negative calcium response element (nCaRE) DNA promoter. The acetylated form induces a stronger binding of YBX1 to the Y-box sequence in the MDR1 promoter than the unacetylated form. Deacetylated on lysines. Lys-6 and Lys-7 are deacetylated by SIRT1. Cleaved at Lys-30 by granzyme A to create the mitochondrial form; leading in reduction of binding to DNA, AP endodeoxyribonuclease activity, redox activation of transcription factors and to enhanced cell death. Cleaved by granzyme K; leading to intracellular ROS accumulation and enhanced cell death after oxidative stress. In terms of processing, cys-64 and Cys-92 are nitrosylated in response to nitric oxide (NO) and lead to the exposure of the nuclear export signal (NES). Post-translationally, ubiquitinated by MDM2; leading to translocation to the cytoplasm and proteasomal degradation. In terms of tissue distribution, expressed in both resting and stimulated B cells stimulated to switch (at protein level).

It is found in the nucleus. It localises to the nucleolus. Its subcellular location is the nucleus speckle. The protein localises to the endoplasmic reticulum. The protein resides in the cytoplasm. It is found in the mitochondrion. It catalyses the reaction a deoxyribonucleotide-2'-deoxyribose-5'-monophosphate-DNA + H2O = a 5'-end 2'-deoxyribose-5'-monophosphate-DNA + a 3'-end 2'-deoxyribonucleotide-DNA + H(+). The catalysed reaction is Exonucleolytic cleavage in the 3'- to 5'-direction to yield nucleoside 5'-phosphates.. It carries out the reaction a 3'-end 2'-deoxyribonucleotide-3'-phosphoglycolate-DNA + H2O = 2-phosphoglycolate + a 3'-end 2'-deoxyribonucleotide-DNA + H(+). The enzyme catalyses a 3'-end 2'-deoxyribonucleotide-8-oxoguanine-DNA + H2O = 8-oxo-dGMP + a 3'-end 2'-deoxyribonucleotide-DNA + H(+). With respect to regulation, NPM1 stimulates endodeoxyribonuclease activity on double-stranded DNA with AP sites, but inhibits endoribonuclease activity on single-stranded RNA containing AP sites. Its function is as follows. Multifunctional protein that plays a central role in the cellular response to oxidative stress. The two major activities of APEX1 are DNA repair and redox regulation of transcriptional factors. Functions as an apurinic/apyrimidinic (AP) endodeoxyribonuclease in the base excision repair (BER) pathway of DNA lesions induced by oxidative and alkylating agents. Initiates repair of AP sites in DNA by catalyzing hydrolytic incision of the phosphodiester backbone immediately adjacent to the damage, generating a single-strand break with 5'-deoxyribose phosphate and 3'-hydroxyl ends. Also incises at AP sites in the DNA strand of DNA/RNA hybrids, single-stranded DNA regions of R-loop structures, and single-stranded RNA molecules. Operates at switch sites of immunoglobulin (Ig) constant regions where it mediates Ig isotype class switch recombination. Processes AP sites induced by successive action of AICDA and UNG. Generates staggered nicks in opposite DNA strands resulting in the formation of double-strand DNA breaks that are finally resolved via non-homologous end joining repair pathway. Has 3'-5' exodeoxyribonuclease activity on mismatched deoxyribonucleotides at the 3' termini of nicked or gapped DNA molecules during short-patch BER. Possesses DNA 3' phosphodiesterase activity capable of removing lesions (such as phosphoglycolate and 8-oxoguanine) blocking the 3' side of DNA strand breaks. Also acts as an endoribonuclease involved in the control of single-stranded RNA metabolism. Plays a role in regulating MYC mRNA turnover by preferentially cleaving in between UA and CA dinucleotides of the MYC coding region determinant (CRD). In association with NMD1, plays a role in the rRNA quality control process during cell cycle progression. Acts as a loading factor for POLB onto non-incised AP sites in DNA and stimulates the 5'-terminal deoxyribose 5'-phosphate (dRp) excision activity of POLB. Exerts reversible nuclear redox activity to regulate DNA binding affinity and transcriptional activity of transcriptional factors by controlling the redox status of their DNA-binding domain, such as the FOS/JUN AP-1 complex after exposure to IR. Involved in calcium-dependent down-regulation of parathyroid hormone (PTH) expression by binding to negative calcium response elements (nCaREs). Together with HNRNPL or the dimer XRCC5/XRCC6, associates with nCaRE, acting as an activator of transcriptional repression. May also play a role in the epigenetic regulation of gene expression by participating in DNA demethylation. Stimulates the YBX1-mediated MDR1 promoter activity, when acetylated at Lys-6 and Lys-7, leading to drug resistance. Plays a role in protection from granzyme-mediated cellular repair leading to cell death. Binds DNA and RNA. Associates, together with YBX1, on the MDR1 promoter. Together with NPM1, associates with rRNA. The chain is DNA repair nuclease/redox regulator APEX1 (Apex1) from Mus musculus (Mouse).